Reading from the N-terminus, the 702-residue chain is Antigen peptide transporter 2 (702 aa).

Residues 1–6 (MALSYL) are Lumenal-facing. A helical membrane pass occupies residues 7–27 (RPWVSLLLADMALLGLLQGSL). At 28-56 (GNLLPQGLPGLWIEGTLRLGVLWGLLKVG) the chain is on the cytoplasmic side. A helical transmembrane segment spans residues 57-77 (ELLGLVGTLLPLLCLATPLFF). Topologically, residues 78 to 98 (SLRALVGGTASTSVVRVASAS) are lumenal. Residues 99-119 (WGWLLAGYGAVALSWAVWAVL) form a helical membrane-spanning segment. Over 120–147 (SPAGVQEKEPGQENRTLMKRLLKLSRPD) the chain is Cytoplasmic. Residues 148–168 (LPFLIAAFFFLVVAVWGETLI) traverse the membrane as a helical segment. Positions 151–434 (LIAAFFFLVV…LVYMYGDMLS (284 aa)) constitute an ABC transmembrane type-1 domain. Over 169–186 (PRYSGRVIDILGGDFDPD) the chain is Lumenal. Residues 187 to 207 (AFASAIFFMCLFSVGSSFSAG) form a helical membrane-spanning segment. Over 208–265 (CRGGSFLFTMSRINLRIREQLFSSLLRQDLGFFQETKTGELNSRLSSDTSLMSRWLPF) the chain is Cytoplasmic. A helical membrane pass occupies residues 266–286 (NANILLRSLVKVVGLYFFMLQ). The Lumenal segment spans residues 287 to 292 (VSPRLT). The helical transmembrane segment at 293 to 313 (FLSLLDLPLTIAAEKVYNPRH) threads the bilayer. Residues 300–388 (PLTIAAEKVY…RRVMALGMQV (89 aa)) are part of the peptide-binding site. Residues 314–373 (QAVLKEIQDAVAKAGQVVREAVGGLQTVRSFGAEEQEVSHYKEALERCRQLWWRRDLEKD) are Cytoplasmic-facing. The chain crosses the membrane as a helical span at residues 374–394 (VYLVIRRVMALGMQVLILNCG). At 395 to 407 (VQQILAGEVTRGG) the chain is on the lumenal side. Residues 408–428 (LLSFLLYQEEVGQYVRNLVYM) traverse the membrane as a helical segment. The interval 413–432 (LYQEEVGQYVRNLVYMYGDM) is part of the peptide-binding site. Residues 429 to 702 (YGDMLSNVGA…AHLVQQRLEA (274 aa)) lie on the Cytoplasmic side of the membrane. In terms of domain architecture, ABC transporter spans 467-701 (VEFQDVSFSY…YAHLVQQRLE (235 aa)). 502-509 (GPNGSGKS) serves as a coordination point for ATP.

The protein belongs to the ABC transporter superfamily. ABCB family. MHC peptide exporter (TC 3.A.1.209) subfamily. As to quaternary structure, heterodimer of TAP1 and TAP2 (TAP1-TAP2). A component of the peptide loading complex (PLC), interacts via TAPBP with MHCI heterodimer; this interaction mediates peptide-MHCI assembly. It depends on Mg(2+) as a cofactor.

It localises to the endoplasmic reticulum membrane. The enzyme catalyses a peptide antigen(in) + ATP + H2O = a peptide antigen(out) + ADP + phosphate + H(+). Its function is as follows. ABC transporter associated with antigen processing. In complex with TAP1 mediates unidirectional translocation of peptide antigens from cytosol to endoplasmic reticulum (ER) for loading onto MHC class I (MHCI) molecules. Uses the chemical energy of ATP to export peptides against the concentration gradient. During the transport cycle alternates between 'inward-facing' state with peptide binding site facing the cytosol to 'outward-facing' state with peptide binding site facing the ER lumen. Peptide antigen binding to ATP-loaded TAP1-TAP2 induces a switch to hydrolysis-competent 'outward-facing' conformation ready for peptide loading onto nascent MHCI molecules. Subsequently ATP hydrolysis resets the transporter to the 'inward facing' state for a new cycle. As a component of the peptide loading complex (PLC), acts as a molecular scaffold essential for peptide-MHCI assembly and antigen presentation. The sequence is that of Antigen peptide transporter 2 (Tap2) from Mus musculus (Mouse).